A 69-amino-acid chain; its full sequence is Large ribosomal subunit protein bL31 (69 aa).

Residues C16, C18, C38, and C41 each coordinate Zn(2+).

Belongs to the bacterial ribosomal protein bL31 family. Type A subfamily. As to quaternary structure, part of the 50S ribosomal subunit. Requires Zn(2+) as cofactor.

Its function is as follows. Binds the 23S rRNA. The chain is Large ribosomal subunit protein bL31 from Thermobifida fusca (strain YX).